The chain runs to 845 residues: Beta-glucosidase (845 aa).

The N-linked (GlcNAc...) asparagine glycan is linked to N66. D225 is a catalytic residue. N304, N438, and N621 each carry an N-linked (GlcNAc...) asparagine glycan. The PA14 domain maps to 408–568 (AENAGLIAKF…DDDEEIRNAA (161 aa)).

This sequence belongs to the glycosyl hydrolase 3 family. Homotetramer.

It catalyses the reaction Hydrolysis of terminal, non-reducing beta-D-glucosyl residues with release of beta-D-glucose.. Its pathway is glycan metabolism; cellulose degradation. This chain is Beta-glucosidase, found in Kluyveromyces marxianus (Yeast).